Consider the following 177-residue polypeptide: Small ribosomal subunit protein uS4 (177 aa).

One can recognise an S4 RNA-binding domain in the interval R104–P166. The interval T158–A177 is disordered. The segment covering P165–A177 has biased composition (polar residues).

The protein belongs to the universal ribosomal protein uS4 family. In terms of assembly, part of the 30S ribosomal subunit. Contacts protein S5. The interaction surface between S4 and S5 is involved in control of translational fidelity.

One of the primary rRNA binding proteins, it binds directly to 16S rRNA where it nucleates assembly of the body of the 30S subunit. Its function is as follows. With S5 and S12 plays an important role in translational accuracy. The sequence is that of Small ribosomal subunit protein uS4 from Sulfurisphaera tokodaii (strain DSM 16993 / JCM 10545 / NBRC 100140 / 7) (Sulfolobus tokodaii).